We begin with the raw amino-acid sequence, 256 residues long: Imidazole glycerol phosphate synthase subunit HisF (256 aa).

Residues aspartate 11 and aspartate 130 contribute to the active site.

It belongs to the HisA/HisF family. In terms of assembly, heterodimer of HisH and HisF.

It is found in the cytoplasm. The enzyme catalyses 5-[(5-phospho-1-deoxy-D-ribulos-1-ylimino)methylamino]-1-(5-phospho-beta-D-ribosyl)imidazole-4-carboxamide + L-glutamine = D-erythro-1-(imidazol-4-yl)glycerol 3-phosphate + 5-amino-1-(5-phospho-beta-D-ribosyl)imidazole-4-carboxamide + L-glutamate + H(+). It functions in the pathway amino-acid biosynthesis; L-histidine biosynthesis; L-histidine from 5-phospho-alpha-D-ribose 1-diphosphate: step 5/9. IGPS catalyzes the conversion of PRFAR and glutamine to IGP, AICAR and glutamate. The HisF subunit catalyzes the cyclization activity that produces IGP and AICAR from PRFAR using the ammonia provided by the HisH subunit. The protein is Imidazole glycerol phosphate synthase subunit HisF of Cupriavidus taiwanensis (strain DSM 17343 / BCRC 17206 / CCUG 44338 / CIP 107171 / LMG 19424 / R1) (Ralstonia taiwanensis (strain LMG 19424)).